Reading from the N-terminus, the 472-residue chain is Succinate-semialdehyde dehydrogenase [NADP(+)] (472 aa).

Residues 134-135, 158-161, and 210-211 contribute to the NADP(+) site; these read WN, KHAS, and GS. Glutamate 232 acts as the Proton acceptor in catalysis. Leucine 233 serves as a coordination point for NADP(+). Residue cysteine 266 is the Nucleophile of the active site. Glutamate 363 contributes to the NADP(+) binding site.

The protein belongs to the aldehyde dehydrogenase family.

It catalyses the reaction succinate semialdehyde + NADP(+) + H2O = succinate + NADPH + 2 H(+). In terms of biological role, catalyzes the NADP(+)-dependent oxidation of succinate semialdehyde to succinate. It is believed to be the main source of succinate semialdehyde dehydrogenase activity in Mycobacterium. This chain is Succinate-semialdehyde dehydrogenase [NADP(+)] (gabD1), found in Mycobacterium avium (strain 104).